Consider the following 144-residue polypeptide: Large ribosomal subunit protein uL16 (144 aa).

The protein belongs to the universal ribosomal protein uL16 family. As to quaternary structure, part of the 50S ribosomal subunit.

Its function is as follows. Binds 23S rRNA and is also seen to make contacts with the A and possibly P site tRNAs. The protein is Large ribosomal subunit protein uL16 of Bacillus licheniformis (strain ATCC 14580 / DSM 13 / JCM 2505 / CCUG 7422 / NBRC 12200 / NCIMB 9375 / NCTC 10341 / NRRL NRS-1264 / Gibson 46).